The following is a 495-amino-acid chain: MFRQWLTLVIIVLVYIPVAIDATVLHVAAPTLSMTLGASGNELLWIIDIYSLVMAGMVLPMGALGDRIGFKRLLMLGGTLFGLASLAAAFSHTASWLIATRVLLAIGAAMIVPATLAGIRATFCEEKHRNMALGVWAAVGSGGAAFGPLIGGILLEHFYWGSVFLINVPIVLVVMGLTARYVPRQAGRRDQPLNLGHAVMLIIAILLLVYSAKTALKGHLSLWVISFTLLTGALLLGLFIRTQLATSRPMIDMRLFTHRIILSGVVMAMTAMITLVGFELLMAQELQFVHGLSPYEAGVFMLPVMVASGFSGPIAGVLVSRLGLRLVATGGMALSALSFYGLAMTDFSTQQWQAWGLMALLGFSAASALLASTSAIMAAAPAEKAAAAGAIETMAYELGAGLGIAIFGLLLSRSFSASIRLPAGLEAQEIARASSSMGEAVQLANSLPPTQGQAILDAARHAFIWSHSVALSSAGSMLLLLAVGMWFSLAKAQRR.

The next 14 helical transmembrane spans lie at 5 to 25 (WLTL…ATVL), 44 to 64 (LWII…MGAL), 73 to 93 (LLML…FSHT), 96 to 116 (WLIA…PATL), 135 to 155 (VWAA…GILL), 158 to 178 (FYWG…MGLT), 192 to 212 (PLNL…VYSA), 220 to 240 (LSLW…GLFI), 260 to 280 (IILS…GFEL), 299 to 319 (VFML…GVLV), 327 to 347 (VATG…MTDF), 357 to 377 (LMAL…SAIM), 391 to 411 (IETM…GLLL), and 469 to 489 (VALS…WFSL).

It belongs to the major facilitator superfamily. TCR/Tet family.

The protein resides in the cell inner membrane. Functionally, major efflux pump for acriflavine and other quaternary ammonium compounds (QACs). Also required for resistance to methyl viologen. This chain is Methyl viologen resistance protein SmvA (smvA), found in Salmonella typhimurium (strain LT2 / SGSC1412 / ATCC 700720).